Reading from the N-terminus, the 504-residue chain is Anaerobic nitric oxide reductase transcription regulator NorR (504 aa).

The residue at position 57 (aspartate 57) is a 4-aspartylphosphate. The 230-residue stretch at 187–416 (MIGLSPGMTQ…LEHAIHRAVV (230 aa)) folds into the Sigma-54 factor interaction domain. ATP is bound by residues 215–222 (GETGTGKE) and 278–287 (ADNGTLFLDE). Positions 479 to 498 (WAACARMLETDVANLHRLAK) form a DNA-binding region, H-T-H motif.

The protein operates within nitrogen metabolism; nitric oxide reduction. Its function is as follows. Required for the expression of anaerobic nitric oxide (NO) reductase, acts as a transcriptional activator for at least the norVW operon. Activation also requires sigma-54. This is Anaerobic nitric oxide reductase transcription regulator NorR from Shigella sonnei (strain Ss046).